The chain runs to 259 residues: UPF0246 protein PA14_18590 (259 aa).

Belongs to the UPF0246 family.

This chain is UPF0246 protein PA14_18590, found in Pseudomonas aeruginosa (strain UCBPP-PA14).